Here is a 231-residue protein sequence, read N- to C-terminus: NKG2-C type II integral membrane protein (231 aa).

Residues 1-12 (MNKQRGTFSEVS) are compositionally biased toward polar residues. Positions 1-32 (MNKQRGTFSEVSLAQDPKRQQRKPKGNKSSIS) are disordered. At 1–70 (MNKQRGTFSE…CQGLLPPPEK (70 aa)) the chain is on the cytoplasmic side. A helical; Signal-anchor for type II membrane protein transmembrane segment spans residues 71-93 (LTAEVLGIICIVLMATVLKTIVL). The Extracellular segment spans residues 94–231 (IPFLEQNNFS…SMIYHCKHKL (138 aa)). Asparagine 100 carries an N-linked (GlcNAc...) asparagine glycan. The C-type lectin domain maps to 116 to 229 (HCPEEWITYS…GSSMIYHCKH (114 aa)). 3 cysteine pairs are disulfide-bonded: cysteine 117/cysteine 128, cysteine 145/cysteine 227, and cysteine 206/cysteine 219. Asparagine 149 and asparagine 178 each carry an N-linked (GlcNAc...) asparagine glycan.

As to quaternary structure, heterodimer with KLRD1; disulfide-linked. KLRD1-KLRC2 receptor complex interacts with TYROBP homodimer; this interaction is necessary for the expression on the cell surface. KLRD1-KLRC2 receptor complex can bind with low affinity to HLA-E loaded with self-peptides derived from the signal sequence of classical MHC class Ia. In terms of tissue distribution, expressed in NK cell subsets, in particular in adaptive CD57-positive NK cells (at protein level). Expressed in terminally differentiated cytotoxic gamma-delta T cells (at protein level). Expressed in alpha-beta T cells subsets (at protein level). KLRD1-KLRC1 and KLRD1-KLRC2 are differentially expressed within NK and T cell populations, with only minor subsets expressing both receptor complexes (at protein level).

Its subcellular location is the cell membrane. In terms of biological role, immune activating receptor involved in self-nonself discrimination. In complex with KLRD1 on cytotoxic lymphocyte subsets, recognizes non-classical major histocompatibility (MHC) class Ib HLA-E loaded with signal sequence-derived peptides from non-classical MHC class Ib HLA-G molecules, likely playing a role in the generation and effector functions of adaptive natural killer (NK) cells and in maternal-fetal tolerance during pregnancy. Regulates the effector functions of terminally differentiated cytotoxic lymphocyte subsets, and in particular may play a role in adaptive NK cell response to viral infection. Upon HLA-E-peptide binding, transmits intracellular signals via the adapter protein TYROBP/DAP12, triggering the phosphorylation of proximal signaling molecules and cell activation. The chain is NKG2-C type II integral membrane protein (KLRC2) from Homo sapiens (Human).